Reading from the N-terminus, the 147-residue chain is Hemoglobin subunit delta (147 aa).

One can recognise a Globin domain in the interval 3 to 147 (NLTAAEKTQV…VANALAHKYH (145 aa)). H64 and H93 together coordinate heme b.

It belongs to the globin family. As to quaternary structure, heterotetramer of two delta chains and two alpha chains. As to expression, red blood cells.

The sequence is that of Hemoglobin subunit delta (HBD) from Elephas maximus (Indian elephant).